The chain runs to 327 residues: Probable protein phosphatase 2C 59 (327 aa).

An N-terminal signal peptide occupies residues 1 to 24; sequence MREVLLLGSLVVLALLSLFPCCSC. Residues 64–310 enclose the PPM-type phosphatase domain; sequence SYGYASSPGK…DNITCLVVRF (247 aa). Residues aspartate 100, glycine 101, aspartate 262, and aspartate 301 each contribute to the Mn(2+) site.

This sequence belongs to the PP2C family. Mg(2+) serves as cofactor. The cofactor is Mn(2+).

The catalysed reaction is O-phospho-L-seryl-[protein] + H2O = L-seryl-[protein] + phosphate. It carries out the reaction O-phospho-L-threonyl-[protein] + H2O = L-threonyl-[protein] + phosphate. The protein is Probable protein phosphatase 2C 59 of Oryza sativa subsp. japonica (Rice).